The primary structure comprises 1096 residues: Pentatricopeptide repeat-containing protein At5g55840 (1096 aa).

27 PPR repeats span residues N122–P156, S157–P191, D192–P226, T227–A261, D262–P296, N297–P331, N332–P366, S367–V401, G402–P436, D437–P471, N472–R506, D507–P541, N542–P576, T577–V607, D612–P646, D647–L681, N683–P717, D718–P752, N753–P787, D788–V822, D823–L857, D858–P892, E893–P927, P928–P962, T963–L997, D998–A1032, and N1033–T1068.

It belongs to the PPR family. P subfamily.

The chain is Pentatricopeptide repeat-containing protein At5g55840 from Arabidopsis thaliana (Mouse-ear cress).